A 124-amino-acid polypeptide reads, in one-letter code: Small ribosomal subunit protein uS13 (124 aa).

The tract at residues 95 to 124 is disordered; sequence GLPVNGQRTRTNARSSKGPRRTVAGKKKAR. Positions 100–109 are enriched in polar residues; sequence GQRTRTNARS. Residues 111 to 124 show a composition bias toward basic residues; that stretch reads KGPRRTVAGKKKAR.

It belongs to the universal ribosomal protein uS13 family. In terms of assembly, part of the 30S ribosomal subunit. Forms a loose heterodimer with protein S19. Forms two bridges to the 50S subunit in the 70S ribosome.

Its function is as follows. Located at the top of the head of the 30S subunit, it contacts several helices of the 16S rRNA. In the 70S ribosome it contacts the 23S rRNA (bridge B1a) and protein L5 of the 50S subunit (bridge B1b), connecting the 2 subunits; these bridges are implicated in subunit movement. Contacts the tRNAs in the A and P-sites. The protein is Small ribosomal subunit protein uS13 of Tropheryma whipplei (strain TW08/27) (Whipple's bacillus).